The following is a 263-amino-acid chain: Ribosomal RNA small subunit methyltransferase A (263 aa).

The S-adenosyl-L-methionine site is built by Asn-13, Thr-15, Gly-40, Glu-61, Asp-85, and Asn-105.

This sequence belongs to the class I-like SAM-binding methyltransferase superfamily. rRNA adenine N(6)-methyltransferase family. RsmA subfamily.

It localises to the cytoplasm. The enzyme catalyses adenosine(1518)/adenosine(1519) in 16S rRNA + 4 S-adenosyl-L-methionine = N(6)-dimethyladenosine(1518)/N(6)-dimethyladenosine(1519) in 16S rRNA + 4 S-adenosyl-L-homocysteine + 4 H(+). In terms of biological role, specifically dimethylates two adjacent adenosines (A1518 and A1519) in the loop of a conserved hairpin near the 3'-end of 16S rRNA in the 30S particle. May play a critical role in biogenesis of 30S subunits. In Mycoplasma pneumoniae (strain ATCC 29342 / M129 / Subtype 1) (Mycoplasmoides pneumoniae), this protein is Ribosomal RNA small subunit methyltransferase A.